Reading from the N-terminus, the 394-residue chain is Elongation factor Tu (394 aa).

The region spanning 10-204 (LPHVNIGTIG…AVDEYIPTPT (195 aa)) is the tr-type G domain. The G1 stretch occupies residues 19 to 26 (GHVDHGKT). Residue 19 to 26 (GHVDHGKT) coordinates GTP. T26 contacts Mg(2+). The tract at residues 60–64 (GITIN) is G2. Residues 81-84 (DCPG) form a G3 region. GTP contacts are provided by residues 81–85 (DCPGH) and 136–139 (NKCD). The interval 136–139 (NKCD) is G4. Residues 174–176 (SAL) form a G5 region.

This sequence belongs to the TRAFAC class translation factor GTPase superfamily. Classic translation factor GTPase family. EF-Tu/EF-1A subfamily. In terms of assembly, monomer.

It localises to the cytoplasm. It carries out the reaction GTP + H2O = GDP + phosphate + H(+). GTP hydrolase that promotes the GTP-dependent binding of aminoacyl-tRNA to the A-site of ribosomes during protein biosynthesis. The chain is Elongation factor Tu from Mesoplasma florum (strain ATCC 33453 / NBRC 100688 / NCTC 11704 / L1) (Acholeplasma florum).